The primary structure comprises 144 residues: Large ribosomal subunit protein uL13 (144 aa).

This sequence belongs to the universal ribosomal protein uL13 family. As to quaternary structure, part of the 50S ribosomal subunit.

Functionally, this protein is one of the early assembly proteins of the 50S ribosomal subunit, although it is not seen to bind rRNA by itself. It is important during the early stages of 50S assembly. This Legionella pneumophila (strain Paris) protein is Large ribosomal subunit protein uL13.